Consider the following 309-residue polypeptide: tRNA dimethylallyltransferase (309 aa).

ATP is bound at residue 10–17; the sequence is GPTAVGKT. 12 to 17 lines the substrate pocket; that stretch reads TAVGKT. The segment at 35-38 is interaction with substrate tRNA; that stretch reads DSMQ.

It belongs to the IPP transferase family. As to quaternary structure, monomer. Requires Mg(2+) as cofactor.

The enzyme catalyses adenosine(37) in tRNA + dimethylallyl diphosphate = N(6)-dimethylallyladenosine(37) in tRNA + diphosphate. Its function is as follows. Catalyzes the transfer of a dimethylallyl group onto the adenine at position 37 in tRNAs that read codons beginning with uridine, leading to the formation of N6-(dimethylallyl)adenosine (i(6)A). This chain is tRNA dimethylallyltransferase, found in Clostridium botulinum (strain Alaska E43 / Type E3).